We begin with the raw amino-acid sequence, 130 residues long: Small ribosomal subunit protein uS8 (130 aa).

The protein belongs to the universal ribosomal protein uS8 family. As to quaternary structure, part of the 30S ribosomal subunit. Contacts proteins S5 and S12.

Functionally, one of the primary rRNA binding proteins, it binds directly to 16S rRNA central domain where it helps coordinate assembly of the platform of the 30S subunit. The chain is Small ribosomal subunit protein uS8 from Buchnera aphidicola subsp. Acyrthosiphon pisum (strain 5A).